The chain runs to 242 residues: Uridylate kinase (242 aa).

Residue 16–19 participates in ATP binding; that stretch reads KVSG. G58 is a binding site for UMP. G59 and R63 together coordinate ATP. Residues D78 and 139–146 each bind UMP; that span reads TGNPFCTT. Residues T166, Q167, Y172, and D175 each contribute to the ATP site.

It belongs to the UMP kinase family. As to quaternary structure, homohexamer.

It localises to the cytoplasm. The catalysed reaction is UMP + ATP = UDP + ADP. The protein operates within pyrimidine metabolism; CTP biosynthesis via de novo pathway; UDP from UMP (UMPK route): step 1/1. Its activity is regulated as follows. Inhibited by UTP. Functionally, catalyzes the reversible phosphorylation of UMP to UDP. The polypeptide is Uridylate kinase (Rickettsia massiliae (strain Mtu5)).